Reading from the N-terminus, the 213-residue chain is Succinate dehydrogenase subunit 3-1, mitochondrial (213 aa).

The N-terminal 105 residues, 1–105, are a transit peptide targeting the mitochondrion; that stretch reads MAATALFRSI…LDVGTSKRLF (105 aa). Residue histidine 130 participates in heme binding. The helical transmembrane segment at 148–165 threads the bilayer; that stretch reads ISGVYLTGVTFAGYLLYL.

Component of complex II composed of eight subunits in plants: four classical SDH subunits SDH1, SDH2, SDH3 and SDH4 (a flavoprotein (FP), an iron-sulfur protein (IP), and a cytochrome b composed of a large and a small subunit.), as well as four subunits unknown in mitochondria from bacteria and heterotrophic eukaryotes. It depends on heme as a cofactor. Expressed in flowers, inflorescences and stems.

The protein localises to the mitochondrion inner membrane. It participates in carbohydrate metabolism; tricarboxylic acid cycle. In terms of biological role, membrane-anchoring subunit of succinate dehydrogenase (SDH). In Arabidopsis thaliana (Mouse-ear cress), this protein is Succinate dehydrogenase subunit 3-1, mitochondrial.